Reading from the N-terminus, the 488-residue chain is 3-octaprenyl-4-hydroxybenzoate carboxy-lyase (488 aa).

A Mn(2+)-binding site is contributed by Asn-172. Prenylated FMN-binding positions include 175–177 (IYR), 189–191 (RWL), and 194–195 (RG). Position 238 (Glu-238) interacts with Mn(2+). Asp-287 serves as the catalytic Proton donor.

The protein belongs to the UbiD family. Homohexamer. It depends on prenylated FMN as a cofactor. Requires Mn(2+) as cofactor.

Its subcellular location is the cell membrane. It catalyses the reaction a 4-hydroxy-3-(all-trans-polyprenyl)benzoate + H(+) = a 2-(all-trans-polyprenyl)phenol + CO2. The protein operates within cofactor biosynthesis; ubiquinone biosynthesis. Its function is as follows. Catalyzes the decarboxylation of 3-octaprenyl-4-hydroxy benzoate to 2-octaprenylphenol, an intermediate step in ubiquinone biosynthesis. The polypeptide is 3-octaprenyl-4-hydroxybenzoate carboxy-lyase (Stutzerimonas stutzeri (strain A1501) (Pseudomonas stutzeri)).